We begin with the raw amino-acid sequence, 263 residues long: Insulin-like growth factor-binding protein 1 (263 aa).

The first 25 residues, 1-25, serve as a signal peptide directing secretion; it reads MPEVLAVRAWPLLLSLAVQLGATVG. The IGFBP N-terminal domain maps to 28-109; the sequence is QPWRCAPCSA…TRGQGACMTT (82 aa). 6 disulfide bridges follow: Cys32-Cys59, Cys35-Cys61, Cys43-Cys62, Cys50-Cys65, Cys73-Cys86, and Cys80-Cys106. Positions 102–131 are disordered; that stretch reads GQGACMTTPSDEATDTKDTTSPENVSPESS. Phosphoserine occurs at positions 122, 127, 130, 148, and 160. Polar residues predominate over residues 122–131; sequence SPENVSPESS. At Tyr162 the chain carries Phosphotyrosine. The 79-residue stretch at 177–255 folds into the Thyroglobulin type-1 domain; the sequence is KEPCQRELYK…SVAVRGDPKC (79 aa). Intrachain disulfides connect Cys180–Cys210, Cys221–Cys232, and Cys234–Cys255. Residue Ser246 is modified to Phosphoserine. Residues 250-252 carry the Cell attachment site motif; it reads RGD.

In terms of assembly, binds equally well IGF1 and IGF2. Interacts with integrin ITGA5:ITGB1. Interacts with VHL; this interaction inhibits HIF1A degradation.

The protein resides in the secreted. Functionally, multifunctional protein that plays a critical role in regulating the availability of IGFs such as IGF1 and IGF2 to their receptors and thereby regulates IGF-mediated cellular processes including cell migration, proliferation, differentiation or apoptosis in a cell-type specific manner. Also plays a positive role in cell migration by interacting with integrin ITGA5:ITGB1 through its RGD motif. Mechanistically, binding to integrins leads to activation of focal adhesion kinase/PTK2 and stimulation of the mitogen-activated protein kinase (MAPK) pathway. Regulates cardiomyocyte apoptosis by suppressing HIF-1alpha/HIF1A degradation through ubiquitination. The sequence is that of Insulin-like growth factor-binding protein 1 (IGFBP1) from Bos taurus (Bovine).